We begin with the raw amino-acid sequence, 963 residues long: Respiratory burst oxidase homolog protein A (963 aa).

Over residues 1–12 (MRGLPGHERRWT) the composition is skewed to basic and acidic residues. Residues 1-36 (MRGLPGHERRWTSDTVSSGKDLSGESSPGTDSGNIS) are disordered. Residues 1 to 399 (MRGLPGHERR…VYSLQENWKR (399 aa)) lie on the Cytoplasmic side of the membrane. Positions 13 to 36 (SDTVSSGKDLSGESSPGTDSGNIS) are enriched in polar residues. EF-hand-like stretches follow at residues 219–227 (AKDGYLYRS) and 253–264 (RRLKVDKISKEE). The 36-residue stretch at 276 to 311 (SFDSRLQIFFDMVDKNEDGRIGEEEVKEIIMLSASA) folds into the EF-hand domain. Residues D289, N291, D293, R295, and E300 each coordinate Ca(2+). Residues 400–420 (IWVLVLWILIMIGLFLWKFYL) traverse the membrane as a helical segment. Over 421–435 (YKQKSAFQVMGYCLL) the chain is Extracellular. The chain crosses the membrane as a helical span at residues 436–456 (TAKGAAETLKFNMALILLPVC). In terms of domain architecture, Ferric oxidoreductase spans 438 to 595 (KGAAETLKFN…LLIIVYIVLI (158 aa)). The Cytoplasmic segment spans residues 457 to 482 (RNTITFLRSTKLSCFVPFDDNINFHK). A helical transmembrane segment spans residues 483–503 (TVAAAIVTGIILHAGNHLVCD). The Extracellular portion of the chain corresponds to 504 to 535 (FPKLIHANNTNYQKYLVNDFGPSQPQYIDLVK). A helical transmembrane segment spans residues 536–556 (GVEGVTGIIMVILMAIAFTLA). Topologically, residues 557 to 583 (TRWFRRSLIKFPKPFDRLTGFNAFWYS) are cytoplasmic. A helical transmembrane segment spans residues 584-604 (HHLLIIVYIVLIIHGTFLYLV). The Extracellular portion of the chain corresponds to 605 to 759 (HNWYSKTTWM…APAQDYRKYD (155 aa)). An FAD-binding FR-type domain is found at 634–754 (SGLYTVRLLK…DGPYGAPAQD (121 aa)). The helical transmembrane segment at 760-780 (VLLLVGLGIGATPFISILKDL) threads the bilayer. Residues 781–963 (LKNIVTMEEQ…TKFEFHKEHF (183 aa)) lie on the Cytoplasmic side of the membrane.

The protein belongs to the RBOH (TC 5.B.1.3) family. As to quaternary structure, monomer and homodimer. Phosphorylated by CPK.

The protein localises to the cell membrane. Calcium-dependent NADPH oxidase that generates superoxide. Involved in the rapid and transient phase I oxidative burst induced by pathogen infection. The protein is Respiratory burst oxidase homolog protein A (RBOHA) of Solanum tuberosum (Potato).